A 441-amino-acid polypeptide reads, in one-letter code: Ribosomal protein uS12 methylthiotransferase RimO (441 aa).

In terms of domain architecture, MTTase N-terminal spans 8–118 (PKIGFVSLGC…VLQHVHHYVP (111 aa)). [4Fe-4S] cluster is bound by residues C17, C53, C82, C150, C154, and C157. The region spanning 136-373 (LTPRHYAYLK…MQLQQQISAE (238 aa)) is the Radical SAM core domain. Residues 376 to 441 (QEKVGREILV…DEYDLWGSRV (66 aa)) form the TRAM domain.

The protein belongs to the methylthiotransferase family. RimO subfamily. The cofactor is [4Fe-4S] cluster.

It is found in the cytoplasm. It carries out the reaction L-aspartate(89)-[ribosomal protein uS12]-hydrogen + (sulfur carrier)-SH + AH2 + 2 S-adenosyl-L-methionine = 3-methylsulfanyl-L-aspartate(89)-[ribosomal protein uS12]-hydrogen + (sulfur carrier)-H + 5'-deoxyadenosine + L-methionine + A + S-adenosyl-L-homocysteine + 2 H(+). In terms of biological role, catalyzes the methylthiolation of an aspartic acid residue of ribosomal protein uS12. This chain is Ribosomal protein uS12 methylthiotransferase RimO, found in Salmonella agona (strain SL483).